A 280-amino-acid polypeptide reads, in one-letter code: uncharacterized protein (280 aa).

Positions Met-1–Lys-10 are enriched in basic residues. Positions Met-1–Thr-45 are disordered. A compositionally biased stretch (basic and acidic residues) spans Asp-11–Glu-31. Over residues Asp-32 to Asn-41 the composition is skewed to acidic residues.

This is an uncharacterized protein from Acanthamoeba polyphaga mimivirus (APMV).